A 710-amino-acid polypeptide reads, in one-letter code: Ent-copalyl diphosphate synthase 1 (710 aa).

Position 145 (K145) interacts with substrate. 2 residues coordinate Mg(2+): D277 and D279. Residues 277–280 (DIDD) carry the DXDD motif motif. K364 contacts substrate.

Belongs to the terpene synthase family. Tpsc subfamily. The cofactor is Mg(2+). Expressed in germinating seeds and leaves.

The enzyme catalyses (2E,6E,10E)-geranylgeranyl diphosphate = ent-copalyl diphosphate. It functions in the pathway plant hormone biosynthesis; gibberellin biosynthesis. It participates in secondary metabolite biosynthesis; terpenoid biosynthesis. Involved in the biosynthesis of ent-kaurene diterpenoids natural products such as oridonin, miltiradiene, eriocalyxin B and nezukol, known to exhibit antitumor, anti-inflammatory and antibacterial activities, and in the production of gibberellins phytohormones. Catalyzes the conversion of (2E,6E,10E)-geranylgeranyl diphosphate (GGPP) to ent-copalyl diphosphate (ent-CPP). This Isodon eriocalyx (Plectranthus eriocalyx) protein is Ent-copalyl diphosphate synthase 1.